The chain runs to 285 residues: 2-dehydro-3-deoxyphosphooctonate aldolase (285 aa).

It belongs to the KdsA family.

It is found in the cytoplasm. It carries out the reaction D-arabinose 5-phosphate + phosphoenolpyruvate + H2O = 3-deoxy-alpha-D-manno-2-octulosonate-8-phosphate + phosphate. It participates in carbohydrate biosynthesis; 3-deoxy-D-manno-octulosonate biosynthesis; 3-deoxy-D-manno-octulosonate from D-ribulose 5-phosphate: step 2/3. Its pathway is bacterial outer membrane biogenesis; lipopolysaccharide biosynthesis. The chain is 2-dehydro-3-deoxyphosphooctonate aldolase from Acinetobacter baumannii (strain AB307-0294).